The following is a 390-amino-acid chain: Acetylornithine aminotransferase (390 aa).

Residues 105–106 (GA) and Phe-132 each bind pyridoxal 5'-phosphate. Residue Arg-135 participates in N(2)-acetyl-L-ornithine binding. 217–220 (DEVQ) lines the pyridoxal 5'-phosphate pocket. Position 246 is an N6-(pyridoxal phosphate)lysine (Lys-246). Residue Ser-274 participates in N(2)-acetyl-L-ornithine binding. Residue Thr-275 coordinates pyridoxal 5'-phosphate.

The protein belongs to the class-III pyridoxal-phosphate-dependent aminotransferase family. ArgD subfamily. As to quaternary structure, homodimer. It depends on pyridoxal 5'-phosphate as a cofactor.

The protein localises to the cytoplasm. The enzyme catalyses N(2)-acetyl-L-ornithine + 2-oxoglutarate = N-acetyl-L-glutamate 5-semialdehyde + L-glutamate. It functions in the pathway amino-acid biosynthesis; L-arginine biosynthesis; N(2)-acetyl-L-ornithine from L-glutamate: step 4/4. The protein is Acetylornithine aminotransferase of Methanothermobacter thermautotrophicus (strain ATCC 29096 / DSM 1053 / JCM 10044 / NBRC 100330 / Delta H) (Methanobacterium thermoautotrophicum).